Here is a 266-residue protein sequence, read N- to C-terminus: uncharacterized protein (266 aa).

The next 7 membrane-spanning stretches (helical) occupy residues leucine 25 to leucine 45, isoleucine 64 to isoleucine 84, isoleucine 111 to valine 131, valine 158 to glycine 178, isoleucine 186 to alanine 206, phenylalanine 209 to isoleucine 229, and isoleucine 230 to isoleucine 250.

It belongs to the FNT transporter (TC 1.A.16) family.

The protein localises to the cell membrane. This is an uncharacterized protein from Bacillus subtilis (strain 168).